The chain runs to 156 residues: Transcription elongation factor GreA (156 aa).

Residues 2-27 (EKTFPMTKEGLDKLKAELENLKLVKR) are a coiled coil.

This sequence belongs to the GreA/GreB family.

Its function is as follows. Necessary for efficient RNA polymerase transcription elongation past template-encoded arresting sites. The arresting sites in DNA have the property of trapping a certain fraction of elongating RNA polymerases that pass through, resulting in locked ternary complexes. Cleavage of the nascent transcript by cleavage factors such as GreA or GreB allows the resumption of elongation from the new 3'terminus. GreA releases sequences of 2 to 3 nucleotides. This chain is Transcription elongation factor GreA, found in Lactococcus lactis subsp. cremoris (strain MG1363).